The sequence spans 249 residues: Probable septum site-determining protein MinC (249 aa).

The disordered stretch occupies residues 116–149 (AAVSPPPPPPPPPARAEPAAPVARPAPGRMQRNA). Residues 119–130 (SPPPPPPPPPAR) show a composition bias toward pro residues. Over residues 131-142 (AEPAAPVARPAP) the composition is skewed to low complexity.

The protein belongs to the MinC family. As to quaternary structure, interacts with MinD and FtsZ.

Cell division inhibitor that blocks the formation of polar Z ring septums. Rapidly oscillates between the poles of the cell to destabilize FtsZ filaments that have formed before they mature into polar Z rings. Prevents FtsZ polymerization. This is Probable septum site-determining protein MinC from Xanthomonas campestris pv. campestris (strain B100).